The primary structure comprises 308 residues: GTPase Era (308 aa).

The region spanning 14–181 (RCGFVALIGA…RSTLAEMVPP (168 aa)) is the Era-type G domain. The segment at 22 to 29 (GAPNVGKS) is G1. Position 22–29 (22–29 (GAPNVGKS)) interacts with GTP. Positions 48–52 (QTTRA) are G2. A G3 region spans residues 69–72 (DTPG). GTP contacts are provided by residues 69–73 (DTPGI) and 131–134 (NKVD). The tract at residues 131–134 (NKVD) is G4. Residues 160–162 (IAA) form a G5 region. The KH type-2 domain maps to 212–289 (LHQELPYQST…HLFLFVKVRE (78 aa)).

It belongs to the TRAFAC class TrmE-Era-EngA-EngB-Septin-like GTPase superfamily. Era GTPase family. Monomer.

The protein resides in the cytoplasm. It is found in the cell inner membrane. Functionally, an essential GTPase that binds both GDP and GTP, with rapid nucleotide exchange. Plays a role in 16S rRNA processing and 30S ribosomal subunit biogenesis and possibly also in cell cycle regulation and energy metabolism. The protein is GTPase Era of Bradyrhizobium diazoefficiens (strain JCM 10833 / BCRC 13528 / IAM 13628 / NBRC 14792 / USDA 110).